The sequence spans 189 residues: Threonylcarbamoyl-AMP synthase (189 aa).

In terms of domain architecture, YrdC-like spans 7-189 (NFTVKGLTEQ…DAITGKIIRK (183 aa)).

This sequence belongs to the SUA5 family. TsaC subfamily.

It localises to the cytoplasm. The catalysed reaction is L-threonine + hydrogencarbonate + ATP = L-threonylcarbamoyladenylate + diphosphate + H2O. Its function is as follows. Required for the formation of a threonylcarbamoyl group on adenosine at position 37 (t(6)A37) in tRNAs that read codons beginning with adenine. Catalyzes the conversion of L-threonine, HCO(3)(-)/CO(2) and ATP to give threonylcarbamoyl-AMP (TC-AMP) as the acyladenylate intermediate, with the release of diphosphate. In Blochmanniella floridana, this protein is Threonylcarbamoyl-AMP synthase.